A 546-amino-acid polypeptide reads, in one-letter code: Light-independent protochlorophyllide reductase subunit B (546 aa).

Aspartate 36 lines the [4Fe-4S] cluster pocket. The active-site Proton donor is the aspartate 287. Glycine 422–leucine 423 serves as a coordination point for substrate. The disordered stretch occupies residues proline 443 to alanine 501.

It belongs to the ChlB/BchB/BchZ family. As to quaternary structure, protochlorophyllide reductase is composed of three subunits; BchL, BchN and BchB. Forms a heterotetramer of two BchB and two BchN subunits. [4Fe-4S] cluster is required as a cofactor.

It carries out the reaction chlorophyllide a + oxidized 2[4Fe-4S]-[ferredoxin] + 2 ADP + 2 phosphate = protochlorophyllide a + reduced 2[4Fe-4S]-[ferredoxin] + 2 ATP + 2 H2O. Its pathway is porphyrin-containing compound metabolism; bacteriochlorophyll biosynthesis (light-independent). Its function is as follows. Component of the dark-operative protochlorophyllide reductase (DPOR) that uses Mg-ATP and reduced ferredoxin to reduce ring D of protochlorophyllide (Pchlide) to form chlorophyllide a (Chlide). This reaction is light-independent. The NB-protein (BchN-BchB) is the catalytic component of the complex. The sequence is that of Light-independent protochlorophyllide reductase subunit B from Rhodospirillum rubrum (strain ATCC 11170 / ATH 1.1.1 / DSM 467 / LMG 4362 / NCIMB 8255 / S1).